Consider the following 191-residue polypeptide: Clusterin (191 aa).

N79, N116, N142, and N162 each carry an N-linked (GlcNAc...) asparagine glycan. S184 carries the post-translational modification Phosphoserine.

Belongs to the clusterin family. In terms of assembly, antiparallel disulfide-linked heterodimer of an alpha chain and a beta chain. Self-associates and forms higher oligomers. Interacts with a broad range of misfolded proteins, including APP, APOC2 and LYZ. Slightly acidic pH promotes interaction with misfolded proteins. Forms high-molecular weight oligomers upon interaction with misfolded proteins. Interacts with APOA1, LRP2, CLUAP1 and PON1. Interacts with the complement membrane attack complex. Interacts (via alpha chain) with XRCC6. Interacts with SYVN1, COMMD1, BTRC, CUL1 and with ubiquitin and SCF (SKP1-CUL1-F-box protein) E3 ubiquitin-protein ligase complexes. Interacts (via alpha chain) with BAX in stressed cells, where BAX undergoes a conformation change leading to association with the mitochondrial membrane. Does not interact with BAX in unstressed cells. Found in a complex with LTF, CLU, EPPIN and SEMG1. Interacts (immaturely glycosylated pre-secreted form) with HSPA5; this interaction promotes CLU stability and facilitates stress-induced CLU retrotranslocation from the secretory pathway to the mitochondria, thereby reducing stress-induced apoptosis by stabilizing mitochondrial membrane integrity. Interacts with BCL2L1; this interaction releases and activates BAX and promotes cell death. Interacts with TGFBR2 and ACVR1. Interacts (secreted form) with STMN3; this interaction may act as an important modulator during neuronal differentiation. Proteolytically cleaved on its way through the secretory system, probably within the Golgi lumen. Proteolytic cleavage is not necessary for its chaperone activity. All non-secreted forms are not proteolytically cleaved. Chaperone activity of uncleaved forms is dependent on a non-reducing environment. In terms of processing, polyubiquitinated, leading to proteasomal degradation. Under cellular stress, the intracellular level of cleaved form is reduced due to proteasomal degradation. Post-translationally, heavily N-glycosylated. About 30% of the protein mass is comprised of complex N-linked carbohydrate. Endoplasmic reticulum (ER) stress induces changes in glycosylation status and increases level of hypoglycosylated forms. Core carbohydrates are essential for chaperone activity. Non-secreted forms are hypoglycosylated or unglycosylated.

Its subcellular location is the secreted. The protein localises to the nucleus. It is found in the cytoplasm. The protein resides in the mitochondrion membrane. It localises to the cytosol. Its subcellular location is the microsome. The protein localises to the endoplasmic reticulum. It is found in the mitochondrion. The protein resides in the perinuclear region. It localises to the cytoplasmic vesicle. Its subcellular location is the secretory vesicle. The protein localises to the chromaffin granule. In terms of biological role, functions as extracellular chaperone that prevents aggregation of non native proteins. Prevents stress-induced aggregation of blood plasma proteins. Inhibits formation of amyloid fibrils by APP, APOC2, B2M, CALCA, CSN3, SNCA and aggregation-prone LYZ variants (in vitro). Does not require ATP. Maintains partially unfolded proteins in a state appropriate for subsequent refolding by other chaperones, such as HSPA8/HSC70. Does not refold proteins by itself. Binding to cell surface receptors triggers internalization of the chaperone-client complex and subsequent lysosomal or proteasomal degradation. When secreted, protects cells against apoptosis and against cytolysis by complement: inhibits assembly of the complement membrane attack complex (MAC) by preventing polymerization of C9 pore component of the MAC complex. Intracellular forms interact with ubiquitin and SCF (SKP1-CUL1-F-box protein) E3 ubiquitin-protein ligase complexes and promote the ubiquitination and subsequent proteasomal degradation of target proteins. Promotes proteasomal degradation of COMMD1 and IKBKB. Modulates NF-kappa-B transcriptional activity. Following stress, promotes apoptosis. Inhibits apoptosis when associated with the mitochondrial membrane by interference with BAX-dependent release of cytochrome c into the cytoplasm. Plays a role in the regulation of cell proliferation. An intracellular form suppresses stress-induced apoptosis by stabilizing mitochondrial membrane integrity through interaction with HSPA5. Secreted form does not affect caspase or BAX-mediated intrinsic apoptosis and TNF-induced NF-kappa-B-activity. Secreted form act as an important modulator during neuronal differentiation through interaction with STMN3. Plays a role in the clearance of immune complexes that arise during cell injury. The sequence is that of Clusterin from Mesocricetus auratus (Golden hamster).